A 299-amino-acid chain; its full sequence is Very long chain fatty acid elongase 5 (299 aa).

Residue methionine 1 is modified to N-acetylmethionine. Helical transmembrane passes span 26 to 46 (WFLL…LLIV), 64 to 84 (ILVV…CELV), 112 to 132 (VLRW…FFIL), 150 to 170 (MLNI…YFGA), 205 to 225 (GQLL…IWPC), and 226 to 246 (TFPL…IALF). The interval 275 to 299 (AAVNGHTNSFSPLENNVKPRKLRKD) is disordered. Polar residues predominate over residues 279–288 (GHTNSFSPLE). Serine 285 carries the post-translational modification Phosphoserine.

Belongs to the ELO family. ELOVL5 subfamily. As to quaternary structure, interacts with TECR.

Its subcellular location is the endoplasmic reticulum membrane. The protein localises to the cell projection. It is found in the dendrite. The catalysed reaction is a very-long-chain acyl-CoA + malonyl-CoA + H(+) = a very-long-chain 3-oxoacyl-CoA + CO2 + CoA. It carries out the reaction (6Z,9Z,12Z)-octadecatrienoyl-CoA + malonyl-CoA + H(+) = (8Z,11Z,14Z)-3-oxoeicosatrienoyl-CoA + CO2 + CoA. The enzyme catalyses (9Z,12Z,15Z)-octadecatrienoyl-CoA + malonyl-CoA + H(+) = (11Z,14Z,17Z)-3-oxoeicosatrienoyl-CoA + CO2 + CoA. It catalyses the reaction (9Z)-hexadecenoyl-CoA + malonyl-CoA + H(+) = 3-oxo-(11Z)-octadecenoyl-CoA + CO2 + CoA. The catalysed reaction is (9Z)-octadecenoyl-CoA + malonyl-CoA + H(+) = 3-oxo-(11Z)-eicosenoyl-CoA + CO2 + CoA. It carries out the reaction (11Z)-octadecenoyl-CoA + malonyl-CoA + H(+) = 3-oxo-(13Z)-eicosenoyl-CoA + CO2 + CoA. The enzyme catalyses (9Z,12Z)-octadecadienoyl-CoA + malonyl-CoA + H(+) = (11Z,14Z)-3-oxoicosa-11,14-dienoyl-CoA + CO2 + CoA. It catalyses the reaction (6Z,9Z,12Z,15Z)-octadecatetraenoyl-CoA + malonyl-CoA + H(+) = (8Z,11Z,14Z,17Z)-3-oxoicosatetraenoyl-CoA + CO2 + CoA. The catalysed reaction is (5Z,8Z,11Z,14Z)-eicosatetraenoyl-CoA + malonyl-CoA + H(+) = (7Z,10Z,13Z,16Z)-3-oxodocosatetraenoyl-CoA + CO2 + CoA. It carries out the reaction (5Z,8Z,11Z,14Z,17Z)-eicosapentaenoyl-CoA + malonyl-CoA + H(+) = 3-oxo-(7Z,10Z,13Z,16Z,19Z)-docosapentaenoyl-CoA + CO2 + CoA. It functions in the pathway lipid metabolism; polyunsaturated fatty acid biosynthesis. Functionally, catalyzes the first and rate-limiting reaction of the four reactions that constitute the long-chain fatty acids elongation cycle. This endoplasmic reticulum-bound enzymatic process allows the addition of 2 carbons to the chain of long- and very long-chain fatty acids (VLCFAs) per cycle. Condensing enzyme that acts specifically toward polyunsaturated acyl-CoA with the higher activity toward C18:3(n-6) acyl-CoA. May participate in the production of monounsaturated and of polyunsaturated VLCFAs of different chain lengths that are involved in multiple biological processes as precursors of membrane lipids and lipid mediators. In conditions where the essential linoleic and alpha linoleic fatty acids are lacking it is also involved in the synthesis of Mead acid from oleic acid. In Macaca fascicularis (Crab-eating macaque), this protein is Very long chain fatty acid elongase 5.